The chain runs to 1144 residues: Guanine nucleotide-binding protein G(s) subunit alpha isoforms XLas (1144 aa).

4 disordered regions span residues M1–G186, D316–G558, S622–P657, and R735–R772. Positions L31–A46 are enriched in low complexity. Positions K343 to A356 are enriched in basic and acidic residues. Polar residues predominate over residues E358–A369. Positions E370–E381 are enriched in basic and acidic residues. Low complexity-rich tracts occupy residues P467–A499 and E518–G558. A compositionally biased stretch (pro residues) spans P644 to S654. Basic and acidic residues predominate over residues K743–R767. A coiled-coil region spans residues K745–R772. Residues C789–L1144 enclose the G-alpha domain. A G1 motif region spans residues R792–T805. Residue G797–T805 coordinates GTP. S804 provides a ligand contact to Mg(2+). A disordered region spans residues F818–T840. Residues E837–L863 are a coiled coil. The segment at D946–T954 is G2 motif. Residues L947–T954, D973–Q977, and N1042–D1045 contribute to the GTP site. Residue R951 is modified to ADP-ribosylarginine; by cholera toxin. T954 serves as a coordination point for Mg(2+). The segment at F969–R978 is G3 motif. A G4 motif region spans residues I1038–D1045. S1102 bears the Phosphoserine mark. Residues T1114–T1119 form a G5 motif region. Residue A1116 coordinates GTP.

This sequence belongs to the G-alpha family. G(s) subfamily. G proteins are composed of 3 units; alpha, beta and gamma. The alpha chain contains the guanine nucleotide binding site. Interacts through its N-terminal region with ALEX which is produced from the same locus in a different open reading frame. This interaction may inhibit its adenylyl cyclase-stimulating activity. Interacts with MAGED2. In terms of tissue distribution, enriched in neuroendocrine tissues with a particularly high level of expression in pituitary where it is abundant in intermediate and anterior lobes. In adrenal gland, found in central region containing medullary chromaffin cells but not in cortex. In cerebellum, strongly expressed in perikarya of Purkinje cells. Not detected in liver, kidney or neurohypophysis.

It is found in the cell membrane. The protein resides in the apical cell membrane. In terms of biological role, guanine nucleotide-binding proteins (G proteins) function as transducers in numerous signaling pathways controlled by G protein-coupled receptors (GPCRs). Signaling involves the activation of adenylyl cyclases, resulting in increased levels of the signaling molecule cAMP. GNAS functions downstream of several GPCRs, including beta-adrenergic receptors. XLas isoforms interact with the same set of receptors as Gnas isoforms. In Rattus norvegicus (Rat), this protein is Guanine nucleotide-binding protein G(s) subunit alpha isoforms XLas.